Here is a 308-residue protein sequence, read N- to C-terminus: Isoflavone reductase-like protein (308 aa).

Residues 11 to 17 (GGTGYIG), Arg-36, and Lys-45 each bind NADP(+). Lys-133 serves as the catalytic Proton acceptor. NADP(+) is bound at residue Arg-137.

The protein belongs to the NmrA-type oxidoreductase family. Isoflavone reductase subfamily. In terms of assembly, homodimer.

It localises to the cytoplasm. This chain is Isoflavone reductase-like protein, found in Olea europaea (Common olive).